A 443-amino-acid chain; its full sequence is Lysine-specific demethylase 8 (443 aa).

The segment covering 139-165 (TKLEAERGVREPGLESSKLHSPGEHSN) has biased composition (basic and acidic residues). Residues 139 to 174 (TKLEAERGVREPGLESSKLHSPGEHSNKKSFASVTG) are disordered. The JmjC domain occupies 298–443 (GYLAQHQLFE…LSFSVSFWWS (146 aa)). H348, D350, and H427 together coordinate Fe cation.

The cofactor is Fe(2+).

The protein resides in the nucleus. The catalysed reaction is N(6),N(6)-dimethyl-L-lysyl(36)-[histone H3] + 2 2-oxoglutarate + 2 O2 = L-lysyl(36)-[histone H3] + 2 formaldehyde + 2 succinate + 2 CO2. Histone demethylase required for G2/M phase cell cycle progression. Specifically demethylates dimethylated 'Lys-36' (H3K36me2) of histone H3, an epigenetic repressive mark, thereby acting as a transcription activator. May play a role in the regulation of the circadian clock. The chain is Lysine-specific demethylase 8 (kdm8) from Xenopus tropicalis (Western clawed frog).